The chain runs to 339 residues: Phenylalanine--tRNA ligase alpha subunit (339 aa).

Mg(2+) is bound at residue Glu-247.

This sequence belongs to the class-II aminoacyl-tRNA synthetase family. Phe-tRNA synthetase alpha subunit type 1 subfamily. In terms of assembly, tetramer of two alpha and two beta subunits. Mg(2+) is required as a cofactor.

The protein localises to the cytoplasm. The catalysed reaction is tRNA(Phe) + L-phenylalanine + ATP = L-phenylalanyl-tRNA(Phe) + AMP + diphosphate + H(+). This Deinococcus deserti (strain DSM 17065 / CIP 109153 / LMG 22923 / VCD115) protein is Phenylalanine--tRNA ligase alpha subunit.